Consider the following 87-residue polypeptide: Cell division topological specificity factor (87 aa).

The protein belongs to the MinE family.

Prevents the cell division inhibition by proteins MinC and MinD at internal division sites while permitting inhibition at polar sites. This ensures cell division at the proper site by restricting the formation of a division septum at the midpoint of the long axis of the cell. This is Cell division topological specificity factor from Chelativorans sp. (strain BNC1).